We begin with the raw amino-acid sequence, 160 residues long: Oligoribonuclease (160 aa).

Residues 8–158 (LIWIDLEMTG…YNKLKKKTLI (151 aa)) enclose the Exonuclease domain. Tyrosine 129 is an active-site residue.

The protein belongs to the oligoribonuclease family.

It localises to the cytoplasm. 3'-to-5' exoribonuclease specific for small oligoribonucleotides. In Buchnera aphidicola subsp. Baizongia pistaciae (strain Bp), this protein is Oligoribonuclease (orn).